A 251-amino-acid chain; its full sequence is uncharacterized protein (251 aa).

Positions 1–22 are disordered; the sequence is MTQLPELGLRSPNNKSPTGPHP.

This is an uncharacterized protein from Homo sapiens (Human).